A 391-amino-acid polypeptide reads, in one-letter code: Arrestin-C (391 aa).

Positions 369–379 (ARQEPGGREES) are enriched in basic and acidic residues. The interval 369 to 391 (ARQEPGGREESQEALAAEGDEGS) is disordered.

Belongs to the arrestin family. In terms of assembly, homodimer; disulfide-linked in response to retinal illumination. Interacts with CXCR4; the interaction is dependent on the C-terminal phosphorylation of CXCR4 and modulates the calcium ion mobilization activity of CXCR4. Interacts with GPR84.

It is found in the photoreceptor inner segment. It localises to the cell projection. Its subcellular location is the cilium. The protein resides in the photoreceptor outer segment. Functionally, may play a role in an as yet undefined retina-specific signal transduction. Could bind to photoactivated-phosphorylated red/green opsins. This Sus scrofa (Pig) protein is Arrestin-C (ARR3).